Here is a 93-residue protein sequence, read N- to C-terminus: Small ribosomal subunit protein uS19 (93 aa).

Belongs to the universal ribosomal protein uS19 family.

Protein S19 forms a complex with S13 that binds strongly to the 16S ribosomal RNA. In Clavibacter michiganensis subsp. michiganensis (strain NCPPB 382), this protein is Small ribosomal subunit protein uS19.